Consider the following 491-residue polypeptide: Proline-rich protein PRCC (491 aa).

Residues Met-1–Glu-100 are mediates interaction with MAD2L2. Disordered regions lie at residues Met-1–Ala-244, Ile-260–Gln-313, and Glu-432–Lys-454. A compositionally biased stretch (acidic residues) spans Asp-10–Ala-26. The segment covering Ala-40–Ala-49 has biased composition (low complexity). Positions Leu-50–Val-96 are enriched in pro residues. A phosphoserine mark is found at Ser-97, Ser-114, Ser-157, Ser-159, Ser-212, and Ser-218. Residues Gly-111–Leu-120 show a composition bias toward low complexity. Over residues Ala-230–Ala-244 the composition is skewed to low complexity. The residue at position 239 (Thr-239) is a Phosphothreonine. Phosphoserine is present on residues Ser-241 and Ser-267. Positions Gln-262–Ala-272 are enriched in acidic residues. Residues Gly-287–Glu-307 are compositionally biased toward pro residues.

Interacts with MAD2L2; the interaction is direct. Ubiquitous in fetal and adult tissues.

It is found in the nucleus. Its function is as follows. May regulate cell cycle progression through interaction with MAD2L2. This Homo sapiens (Human) protein is Proline-rich protein PRCC (PRCC).